The primary structure comprises 346 residues: MHLNKIRGKNMKKSHILGIIICIILIVGFFISFDSTFLDNPKMMSKSKNNIRNAENLTNISKNSNNLKFLWAYQLQNADIDEIANSNFTLIVIDYSKDGTENGKYSEEEIEKLKKAGKIPIAYISIGEAEDYRFYWDNEWLKNPPKWLGDENPEWEGCYAVKYWHPEWKKIIFSYLDKIIQQGFCGVYLDKVDEFEYWAENGYDEDFTAKEMIKFIVEISNYCRNKTNNSFIIIPQNGERLLEYDKHGKLLNTVSGWAVEDLFYDGVEQKTEEEINERIKLLDKVKDSGKFVLVVDYVDDGTKTNENLKRVEDFINKSLDKGYVPYVAKSDRELDELNTWWLKLIN.

A helical transmembrane segment spans residues Ile-16–Thr-36.

The protein localises to the membrane. This is an uncharacterized protein from Methanocaldococcus jannaschii (strain ATCC 43067 / DSM 2661 / JAL-1 / JCM 10045 / NBRC 100440) (Methanococcus jannaschii).